A 323-amino-acid chain; its full sequence is Sphingolipid delta(4)-desaturase/C4-monooxygenase DES2 (323 aa).

G2 is lipidated: N-myristoyl glycine. Transmembrane regions (helical) follow at residues 41-61 (PHIK…CWLV) and 68-88 (WLLF…TLAI). Residues 89-93 (HDISH) carry the Histidine box-1 motif. Residues 95-99 (TAFGT) are required for C4-hydroxylase activity. The Histidine box-2 motif lies at 128-132 (HVDHH). A helical membrane pass occupies residues 210-231 (VYLLGSSLLGLGLHPISGHFVA). The Histidine box-3 signature appears at 259–263 (HMEHH).

It belongs to the fatty acid desaturase type 1 family. DEGS subfamily. In terms of tissue distribution, highly expressed in intestinal crypt cells and adjacent epithelial cells (at protein level).

It localises to the endoplasmic reticulum membrane. The enzyme catalyses a dihydroceramide + 2 Fe(II)-[cytochrome b5] + O2 + 2 H(+) = a phytoceramide + 2 Fe(III)-[cytochrome b5] + H2O. It carries out the reaction an N-acylsphinganine + 2 Fe(II)-[cytochrome b5] + O2 + 2 H(+) = an N-acylsphing-4-enine + 2 Fe(III)-[cytochrome b5] + 2 H2O. It catalyses the reaction an N-acylsphinganine + 2 Fe(II)-[cytochrome b5] + O2 + 2 H(+) = an N-acyl-(4R)-4-hydroxysphinganine + 2 Fe(III)-[cytochrome b5] + H2O. The catalysed reaction is N-octanoylsphinganine + 2 Fe(II)-[cytochrome b5] + O2 + 2 H(+) = N-octanoyl-4-hydroxysphinganine + 2 Fe(III)-[cytochrome b5] + H2O. It functions in the pathway membrane lipid metabolism; sphingolipid biosynthesis. Its function is as follows. Bifunctional enzyme which acts both as a sphingolipid delta(4)-desaturase and a sphingolipid C4-monooxygenase. This chain is Sphingolipid delta(4)-desaturase/C4-monooxygenase DES2, found in Mus musculus (Mouse).